A 550-amino-acid polypeptide reads, in one-letter code: Glucose-6-phosphate isomerase 1 (550 aa).

Glu-358 functions as the Proton donor in the catalytic mechanism. Active-site residues include His-389 and Lys-513.

This sequence belongs to the GPI family.

It is found in the cytoplasm. The enzyme catalyses alpha-D-glucose 6-phosphate = beta-D-fructose 6-phosphate. Its pathway is carbohydrate biosynthesis; gluconeogenesis. The protein operates within carbohydrate degradation; glycolysis; D-glyceraldehyde 3-phosphate and glycerone phosphate from D-glucose: step 2/4. Its function is as follows. Catalyzes the reversible isomerization of glucose-6-phosphate to fructose-6-phosphate. This chain is Glucose-6-phosphate isomerase 1, found in Streptomyces coelicolor (strain ATCC BAA-471 / A3(2) / M145).